The primary structure comprises 243 residues: 6-carboxyhexanoate--CoA ligase (243 aa).

Belongs to the BioW family. Homodimer. The cofactor is Mg(2+).

The catalysed reaction is heptanedioate + ATP + CoA = 6-carboxyhexanoyl-CoA + AMP + diphosphate. Its pathway is metabolic intermediate metabolism; pimeloyl-CoA biosynthesis; pimeloyl-CoA from pimelate: step 1/1. Its function is as follows. Catalyzes the transformation of pimelate into pimeloyl-CoA with concomitant hydrolysis of ATP to AMP. In Thermocrinis albus (strain DSM 14484 / JCM 11386 / HI 11/12), this protein is 6-carboxyhexanoate--CoA ligase.